Here is a 581-residue protein sequence, read N- to C-terminus: Jasmonoyl--L-amino acid synthetase GH3.5 (581 aa).

Ser92 lines the ATP pocket. Position 95 (Ser95) interacts with jasmonate. ATP is bound by residues Thr115, Asn161, and 324–329; that span reads GASEGW. 159–163 serves as a coordination point for an L-alpha-amino acid; that stretch reads TTNLY. Jasmonate-binding positions include 321-324 and Ser326; that span reads ADYG. Residue 534–538 coordinates an L-alpha-amino acid; that stretch reads EILDH. Lys561 is an ATP binding site.

Belongs to the IAA-amido conjugating enzyme family. In terms of tissue distribution, expressed in green shoots, roots and flowers.

It catalyses the reaction a jasmonate + an L-alpha-amino acid + ATP = a jasmonyl-L-amino acid + AMP + diphosphate + H(+). Its function is as follows. Catalyzes the synthesis of jasmonate-amino acid conjugates by adenylation. Catalyzes the conjugation of jasmonate (JA) to Ile when expressed in a heterologous system (E.coli). Catalyzes in vitro the conjugation of jasmonate (JA) to Ile, Phe, Cys, Leu, Met, Ala, Val and Trp. Involved in the production of JA-Ile in response to infection by the rice blast fungus Magnaporthe oryzae. Required for the accumulation of the flavonoid phytoalexin sakuranetin in response to infection by the rice blast fungus. Involved in herbivory-induced JA-Ile accumulation. Involved in the production of JA-Ile in response to wounding. Required for modulation of light and JA signaling in photomorphogenesis. Required for normal seed development. Required for optimal flower opening and closing and anther dehiscence. May catalyze the synthesis of indole-3-acetic acid (IAA)-amino acid conjugates, providing a mechanism for the plant to cope with the presence of excess auxin. The polypeptide is Jasmonoyl--L-amino acid synthetase GH3.5 (Oryza sativa subsp. japonica (Rice)).